A 306-amino-acid polypeptide reads, in one-letter code: Glutaminase (306 aa).

Substrate contacts are provided by Ser66, Asn116, Glu159, Asn166, Tyr190, Tyr242, and Val260.

It belongs to the glutaminase family. Homotetramer.

The catalysed reaction is L-glutamine + H2O = L-glutamate + NH4(+). This Caulobacter vibrioides (strain ATCC 19089 / CIP 103742 / CB 15) (Caulobacter crescentus) protein is Glutaminase.